The chain runs to 400 residues: 3-phenylpropionate/cinnamic acid dioxygenase ferredoxin--NAD(+) reductase component (400 aa).

5 to 36 lines the FAD pocket; it reads TIIIVGGGQAAAMAAASLRQQGFTGELHLFSD. 146-174 serves as a coordination point for NAD(+); sequence SVVIIGAGTIGLELAASATQRRCKVTVIE.

It belongs to the bacterial ring-hydroxylating dioxygenase ferredoxin reductase family. This dioxygenase system consists of four proteins: the two subunits of the hydroxylase component (HcaE and HcaF), a ferredoxin (HcaC) and a ferredoxin reductase (HcaD). FAD serves as cofactor.

It catalyses the reaction 2 reduced [2Fe-2S]-[ferredoxin] + NAD(+) + H(+) = 2 oxidized [2Fe-2S]-[ferredoxin] + NADH. The protein operates within aromatic compound metabolism; 3-phenylpropanoate degradation. Part of the multicomponent 3-phenylpropionate dioxygenase, that converts 3-phenylpropionic acid (PP) and cinnamic acid (CI) into 3-phenylpropionate-dihydrodiol (PP-dihydrodiol) and cinnamic acid-dihydrodiol (CI-dihydrodiol), respectively. In Escherichia coli (strain K12 / MC4100 / BW2952), this protein is 3-phenylpropionate/cinnamic acid dioxygenase ferredoxin--NAD(+) reductase component.